The primary structure comprises 1048 residues: Integrin alpha-V (1048 aa).

An N-terminal signal peptide occupies residues 1–30; sequence MAFPPRRRLRLGPRGLPLLLSGLLLPLCRA. At 31 to 992 the chain is on the extracellular side; it reads FNLDVESPAE…WGIQPAPMPV (962 aa). FG-GAP repeat units follow at residues 32 to 98, 109 to 170, 173 to 225, 237 to 291, 292 to 357, 358 to 415, and 419 to 482; these read NLDV…RRCQ, DYAK…VEYA, RSKN…VSKY, QLAT…GKNM, SSLH…GDFQ, TIKL…GLNA, and QILE…VYPS. N-linked (GlcNAc...) asparagine glycosylation is present at asparagine 74. 3 disulfide bridges follow: cysteine 89-cysteine 97, cysteine 138-cysteine 158, and cysteine 172-cysteine 185. Residues aspartate 260, asparagine 262, aspartate 264, isoleucine 266, and aspartate 268 each contribute to the Ca(2+) site. Asparagine 290 and asparagine 296 each carry an N-linked (GlcNAc...) asparagine glycan. Residues aspartate 314, asparagine 316, aspartate 318, tyrosine 320, aspartate 322, aspartate 379, aspartate 381, aspartate 383, phenylalanine 385, aspartate 387, aspartate 443, aspartate 445, asparagine 447, tyrosine 449, and aspartate 451 each coordinate Ca(2+). A glycan (N-linked (GlcNAc...) asparagine) is linked at asparagine 488. 2 disulfide bridges follow: cysteine 491–cysteine 502 and cysteine 508–cysteine 565. Asparagine 554 and asparagine 615 each carry an N-linked (GlcNAc...) asparagine glycan. Intrachain disulfides connect cysteine 626/cysteine 632 and cysteine 698/cysteine 711. 4 N-linked (GlcNAc...) asparagine glycosylation sites follow: asparagine 704, asparagine 835, asparagine 851, and asparagine 874. Cystine bridges form between cysteine 852–cysteine 914 and cysteine 904–cysteine 909. 3 N-linked (GlcNAc...) asparagine glycosylation sites follow: asparagine 945, asparagine 973, and asparagine 980. The helical transmembrane segment at 993 to 1016 threads the bilayer; it reads PVWVIILAVLAGLLLLAVLVFVMY. Topologically, residues 1017–1048 are cytoplasmic; that stretch reads RMGFFKRVRPPQEEQEREQLQPHENGEGNSET. The short motif at 1019-1023 is the GFFKR motif element; the sequence is GFFKR. Positions 1027–1042 are enriched in basic and acidic residues; the sequence is PQEEQEREQLQPHENG. The disordered stretch occupies residues 1027-1048; sequence PQEEQEREQLQPHENGEGNSET.

The protein belongs to the integrin alpha chain family. In terms of assembly, heterodimer of an alpha and a beta subunit. The alpha subunit is composed of a heavy and a light chain linked by a disulfide bond. Alpha-V (ITGAV) associates with either beta-1 (ITGB1), beta-3 (ITGB3), beta-5 (ITGB5), beta-6 (ITGB6) or beta-8 (ITGB8). Interacts with RAB25. Interacts with CIB1. Integrins ITGAV:ITGB3 and ITGAV:ITGB5 interact with FBLN5 (via N-terminus). ITGAV:ITGB3 and ITGAV:ITGB5 interact with CCN3. ITGAV:ITGB3 interacts with ADGRA2. ITGAV:ITGB3 interacts with FGF2; it is likely that FGF2 can simultaneously bind ITGAV:ITGB3 and FGF receptors. ITGAV:ITGB3 interacts with SELP (via C-type lectin domain); the interaction mediates cell-cell interaction and adhesion. ITGAV:ITGB3 is found in a ternary complex with CX3CR1 and CX3CL1. ITGAV:ITGB3 is found in a ternary complex with NRG1 and ERBB3. ITGAV:ITGB3 is found in a ternary complex with FGF1 and FGFR1. ITGAV:ITGB3 is found in a ternary complex with IGF1 and IGF1R. ITGAV:ITGB3 interacts with IGF2. ITGAV:ITGB3 and ITGAV:ITGB6 interact with FBN1. ITGAV:ITGB3 interacts with CD9, CD81 and CD151 (via second extracellular domain). ITGAV:ITGB6 interacts with TGFB1. ITGAV:ITGB3 interacts with PTN. Forms a complex with PTPRZ1 and PTN that stimulates endothelial cell migration through ITGB3 'Tyr-773' phosphorylation. Interacts with TM4SF19. As to quaternary structure, (Microbial infection) Alpha-V/beta-6 and alpha-V/beta-3 bind to foot-and-mouth disease virus (FMDV) VP1 protein and acts as a receptor for this virus.

The protein localises to the cell membrane. It localises to the cell junction. It is found in the focal adhesion. The alpha-V (ITGAV) integrins are receptors for vitronectin, cytotactin, fibronectin, fibrinogen, laminin, matrix metalloproteinase-2, osteopontin, osteomodulin, prothrombin, thrombospondin, TGFB1 and vWF. They recognize the sequence R-G-D in a wide array of ligands. Alpha-V integrins may play a role in embryo implantation, angiogenesis and wound healing. ITGAV:ITGB3 binds to fractalkine (CX3CL1) and may act as its coreceptor in CX3CR1-dependent fractalkine signaling. ITGAV:ITGB3 binds to NRG1 (via EGF domain) and this binding is essential for NRG1-ERBB signaling. ITGAV:ITGB3 binds to FGF1 and this binding is essential for FGF1 signaling. ITGAV:ITGB3 binds to FGF2 and this binding is essential for FGF2 signaling. ITGAV:ITGB3 binds to IGF1 and this binding is essential for IGF1 signaling. ITGAV:ITGB3 binds to IGF2 and this binding is essential for IGF2 signaling. ITGAV:ITGB3 binds to IL1B and this binding is essential for IL1B signaling. ITGAV:ITGB3 binds to PLA2G2A via a site (site 2) which is distinct from the classical ligand-binding site (site 1) and this induces integrin conformational changes and enhanced ligand binding to site 1. ITGAV:ITGB3 and ITGAV:ITGB6 act as receptors for fibrillin-1 (FBN1) and mediate R-G-D-dependent cell adhesion to FBN1. Integrin alpha-V/beta-6 or alpha-V/beta-8 (ITGAV:ITGB6 or ITGAV:ITGB8) mediates R-G-D-dependent release of transforming growth factor beta-1 (TGF-beta-1) from regulatory Latency-associated peptide (LAP), thereby playing a key role in TGF-beta-1 activation. ITGAV:ITGB3 acts as a receptor for CD40LG. ITGAV:ITGB3 acts as a receptor for IBSP and promotes cell adhesion and migration to IBSP. In Bos taurus (Bovine), this protein is Integrin alpha-V (ITGAV).